A 1241-amino-acid chain; its full sequence is DNA-directed RNA polymerase subunit beta (1241 aa).

The interval 1186–1210 (EDEIVPTAEKRSSNQDEEALELVDN) is disordered. Acidic residues predominate over residues 1200-1210 (QDEEALELVDN).

It belongs to the RNA polymerase beta chain family. The RNAP catalytic core consists of 2 alpha, 1 beta, 1 beta' and 1 omega subunit. When a sigma factor is associated with the core the holoenzyme is formed, which can initiate transcription.

The catalysed reaction is RNA(n) + a ribonucleoside 5'-triphosphate = RNA(n+1) + diphosphate. DNA-dependent RNA polymerase catalyzes the transcription of DNA into RNA using the four ribonucleoside triphosphates as substrates. This is DNA-directed RNA polymerase subunit beta from Clostridium novyi (strain NT).